The sequence spans 715 residues: Palmitoyltransferase ZDHHC5 (715 aa).

Over 1 to 13 (MPAESGKRFKPSK) the chain is Cytoplasmic. Residues 14–34 (YVPVSAAAIFLVGATTLFFAF) form a helical membrane-spanning segment. Residues 35–52 (TCPGLSLDVSPAVPIYNA) are Extracellular-facing. A helical membrane pass occupies residues 53–73 (IMFLFVLANFSMATFMDPGIF). Topologically, residues 74 to 148 (PRAEEDEDKE…NCIGRRNYRY (75 aa)) are cytoplasmic. Position 91 is a phosphotyrosine (tyrosine 91). The region spanning 104–154 (KWCATCRFYRPPRCSHCSVCDNCVEEFDHHCPWVNNCIGRRNYRYFFLFLL) is the DHHC domain. Cysteine 134 (S-palmitoyl cysteine intermediate) is an active-site residue. Residues 149–169 (FFLFLLSLTAHIMGVFGFGLL) form a helical membrane-spanning segment. The Extracellular portion of the chain corresponds to 170-191 (YVLCHIEELSGVRTAVTMAVMC). Residues 192-212 (VAGLFFIPVAGLTGFHVVLVA) form a helical membrane-spanning segment. At 213-715 (RGRTTNEQVT…VGGTTYEISV (503 aa)) the chain is on the cytoplasmic side. Serine 247 is subject to Phosphoserine. The segment at 289 to 715 (GELRRTKSKG…VGGTTYEISV (427 aa)) is disordered. Threonine 294 is modified (phosphothreonine). Phosphoserine is present on residues serine 296 and serine 299. Threonine 303 bears the Phosphothreonine mark. Position 345 is a phosphoserine (serine 345). Phosphothreonine occurs at positions 348 and 350. Residues 359–373 (SSSSTSAAMPHSSSA) show a composition bias toward low complexity. Residues serine 380, serine 398, serine 406, and serine 409 each carry the phosphoserine modification. A Phosphothreonine modification is found at threonine 411. Residues serine 415, serine 425, serine 429, and serine 432 each carry the phosphoserine modification. Residues 422 to 432 (SSGSRSSSLKS) show a composition bias toward low complexity. Position 436 is a phosphothreonine (threonine 436). Over residues 442 to 478 (QLQSIRSEGTTSTSYKSLANQTRNGSLSYDSLLTPSD) the composition is skewed to polar residues. Phosphoserine occurs at positions 529 and 554. Over residues 581–597 (PRTSSSSDDSKRSPLSK) the composition is skewed to low complexity. Position 617 is an omega-N-methylarginine (arginine 617). Serine 621 is modified (phosphoserine). Phosphothreonine is present on threonine 659. Positions 666 to 677 (LKTTYSKSNGQP) are enriched in polar residues. Phosphoserine occurs at positions 684 and 694. Arginine 697 bears the Omega-N-methylarginine mark.

Belongs to the DHHC palmitoyltransferase family. ERF2/ZDHHC9 subfamily. Autopalmitoylated. Palmitoylation of the C-terminal tail regulates stimulation-dependent plasma membrane motility. Post-translationally, phosphorylation regulates association with endocytic proteins and its subcellular localization. Phosphorylation by LYN during fatty acid uptake leads to inactivation of the activity.

The protein resides in the cell membrane. It carries out the reaction L-cysteinyl-[protein] + hexadecanoyl-CoA = S-hexadecanoyl-L-cysteinyl-[protein] + CoA. In terms of biological role, palmitoyltransferase that catalyzes the addition of palmitate onto various protein substrates such as CTNND2, CD36, GSDMD, NLRP3, NOD1, NOD2, STAT3 and S1PR1 thus plays a role in various biological processes including cell adhesion, inflammation, fatty acid uptake, bacterial sensing or cardiac functions. Plays an important role in the regulation of synapse efficacy by mediating palmitoylation of delta-catenin/CTNND2, thereby increasing synaptic delivery and surface stabilization of alpha-amino-3-hydroxy-5-methyl-4-isoxazole propionic acid receptors (AMPARs). Under basal conditions, remains at the synaptic membrane through FYN-mediated phosphorylation that prevents association with endocytic proteins. Neuronal activity enhances the internalization and trafficking of DHHC5 from spines to dendritic shafts where it palmitoylates delta-catenin/CTNND2. Regulates cell adhesion at the plasma membrane by palmitoylating GOLGA7B and DSG2. Plays a role in innate immune response by mediating the palmitoylation of NOD1 and NOD2 and their proper recruitment to the bacterial entry site and phagosomes. Also participates in fatty acid uptake by palmitoylating CD36 and thereby targeting it to the plasma membrane. Upon binding of fatty acids to CD36, gets phosphorylated by LYN leading to inactivation and subsequent CD36 caveolar endocytosis. Controls oligodendrocyte development by catalyzing STAT3 palmitoylation. Acts as a regulator of inflammatory response by mediating palmitoylation of NLRP3 and GSDMD. Palmitoylates NLRP3 to promote inflammasome assembly and activation. Activates pyroptosis by catalyzing palmitoylation of gasdermin-D (GSDMD), thereby promoting membrane translocation and pore formation of GSDMD. The protein is Palmitoyltransferase ZDHHC5 (Zdhhc5) of Rattus norvegicus (Rat).